A 155-amino-acid polypeptide reads, in one-letter code: Protein E6 (155 aa).

2 zinc fingers span residues 33–69 (CVYC…CRVC) and 106–142 (CYRC…CLGC).

It belongs to the papillomaviridae E6 protein family. In terms of assembly, forms homodimers. Interacts with ubiquitin-protein ligase UBE3A/E6-AP; this interaction stimulates UBE3A ubiquitin activity. Interacts with host TP53 and EP300; this interaction inhibits TP53 activity.

It localises to the host cytoplasm. It is found in the host nucleus. Functionally, this protein has transforming activity in vitro. Its function is as follows. Plays a major role in the induction and maintenance of cellular transformation. E6 associates with host UBE3A/E6-AP ubiquitin-protein ligase and modulates its activity. Sequesters tumor suppressor TP53 in the host cytoplasm and modulates its activity by interacting with host EP300 that results in the reduction of TP53 acetylation and activation. In turn, apoptosis induced by DNA damage is inhibited. E6 also protects host keratinocytes from apoptosis by mediating the degradation of host BAK1. May also inhibit host immune response. In Human papillomavirus 56, this protein is Protein E6.